Reading from the N-terminus, the 900-residue chain is Serine-rich coiled-coil domain-containing protein 1 (900 aa).

2 disordered regions span residues 1-100 (MGDS…HSNM) and 156-178 (KSEG…QSTR). The segment covering 29-56 (LPSSPSSSNTVGVHSSSPSSTNSSSGST) has biased composition (low complexity). Over residues 81–100 (EPTNQNLSISNGAQPGHSNM) the composition is skewed to polar residues. A coiled-coil region spans residues 673-707 (MKDECSMLKLQLKEKDELISQLQEELGKVRHLQKA).

The protein belongs to the CCSER family.

This is Serine-rich coiled-coil domain-containing protein 1 (CCSER1) from Homo sapiens (Human).